Here is a 345-residue protein sequence, read N- to C-terminus: MIKNAIKKVVSGQHLSEEEAGAVMEQIMEGGASPAQIASLLTAMRLKGETVDEITGFARVMRQKSTRVKSKHPVLVDTCGTGGDGAGTFNISTAAAFVVAGAGVPVAKHGNRSVSSRCGSADVLEELGVRVDLDREAVEECLNMVGMAFLFAPLLHRSMGYVAGPRREIGIRTVFNILGPLTNPAGANAQVLGVYSPFLAEMLAKVLARLGVSRAFVVHGAGGLDEISLAGPSILCEVRNGSVRRGLLDPARFGFRYAPVSVLAGGTPRENAAIALKILEGERGARRDVVVLNAALGLVAGGKARNIAEGLEIAALSIDSGLAVAKLRELVEFTGNLSCGEAAVR.

5-phospho-alpha-D-ribose 1-diphosphate-binding positions include Gly80, 83-84 (GD), Thr88, 90-93 (NIST), 108-116 (KHGNRSVSS), and Ser120. Gly80 contributes to the anthranilate binding site. Ser92 serves as a coordination point for Mg(2+). Asn111 is an anthranilate binding site. An anthranilate-binding site is contributed by Arg166. Mg(2+)-binding residues include Asp225 and Glu226.

Belongs to the anthranilate phosphoribosyltransferase family. In terms of assembly, homodimer. The cofactor is Mg(2+).

It carries out the reaction N-(5-phospho-beta-D-ribosyl)anthranilate + diphosphate = 5-phospho-alpha-D-ribose 1-diphosphate + anthranilate. Its pathway is amino-acid biosynthesis; L-tryptophan biosynthesis; L-tryptophan from chorismate: step 2/5. Catalyzes the transfer of the phosphoribosyl group of 5-phosphorylribose-1-pyrophosphate (PRPP) to anthranilate to yield N-(5'-phosphoribosyl)-anthranilate (PRA). The sequence is that of Anthranilate phosphoribosyltransferase from Pelotomaculum thermopropionicum (strain DSM 13744 / JCM 10971 / SI).